A 373-amino-acid polypeptide reads, in one-letter code: Transaldolase (373 aa).

The Schiff-base intermediate with substrate role is filled by Lys143.

Belongs to the transaldolase family. Type 2 subfamily.

It is found in the cytoplasm. It catalyses the reaction D-sedoheptulose 7-phosphate + D-glyceraldehyde 3-phosphate = D-erythrose 4-phosphate + beta-D-fructose 6-phosphate. It functions in the pathway carbohydrate degradation; pentose phosphate pathway; D-glyceraldehyde 3-phosphate and beta-D-fructose 6-phosphate from D-ribose 5-phosphate and D-xylulose 5-phosphate (non-oxidative stage): step 2/3. Its function is as follows. Transaldolase is important for the balance of metabolites in the pentose-phosphate pathway. The sequence is that of Transaldolase (tal) from Mycobacterium bovis (strain ATCC BAA-935 / AF2122/97).